A 207-amino-acid polypeptide reads, in one-letter code: Large ribosomal subunit protein uL4 (207 aa).

Residues 56–77 (FVSGGGKKPWRQKGTGRARHGS) form a disordered region. The segment covering 63–77 (KPWRQKGTGRARHGS) has biased composition (basic residues).

This sequence belongs to the universal ribosomal protein uL4 family. As to quaternary structure, part of the 50S ribosomal subunit.

One of the primary rRNA binding proteins, this protein initially binds near the 5'-end of the 23S rRNA. It is important during the early stages of 50S assembly. It makes multiple contacts with different domains of the 23S rRNA in the assembled 50S subunit and ribosome. Functionally, forms part of the polypeptide exit tunnel. This chain is Large ribosomal subunit protein uL4, found in Phytoplasma australiense.